Here is a 371-residue protein sequence, read N- to C-terminus: Aminomethyltransferase (371 aa).

The protein belongs to the GcvT family. As to quaternary structure, the glycine cleavage system is composed of four proteins: P, T, L and H.

It carries out the reaction N(6)-[(R)-S(8)-aminomethyldihydrolipoyl]-L-lysyl-[protein] + (6S)-5,6,7,8-tetrahydrofolate = N(6)-[(R)-dihydrolipoyl]-L-lysyl-[protein] + (6R)-5,10-methylene-5,6,7,8-tetrahydrofolate + NH4(+). Its function is as follows. The glycine cleavage system catalyzes the degradation of glycine. This chain is Aminomethyltransferase, found in Pectobacterium atrosepticum (strain SCRI 1043 / ATCC BAA-672) (Erwinia carotovora subsp. atroseptica).